A 489-amino-acid chain; its full sequence is Protein-export membrane protein SecD (489 aa).

6 helical membrane passes run 17-37 (VLIV…IPPA), 328-348 (FIQI…AFMV), 356-376 (SIVV…LGIA), 384-404 (LASI…LVVI), 428-448 (LGII…LALM), and 450-470 (LSTL…GVIF).

It belongs to the SecD/SecF family. SecD subfamily. In terms of assembly, part of the protein translocation apparatus. Forms a complex with SecF.

Its subcellular location is the cell membrane. In terms of biological role, involved in protein export. This chain is Protein-export membrane protein SecD, found in Methanolacinia petrolearia (strain DSM 11571 / OCM 486 / SEBR 4847) (Methanoplanus petrolearius).